A 481-amino-acid polypeptide reads, in one-letter code: Mechanosensory protein 2 (481 aa).

Positions 1–22 are enriched in low complexity; that stretch reads MSATMSSARNSVVSLSSNGSVK. Disordered stretches follow at residues 1–67 and 80–104; these read MSAT…MATR and SANS…GNGK. A compositionally biased stretch (polar residues) spans 27–38; that stretch reads LVSNERSSSIQQ. Residues 86–104 are compositionally biased toward basic and acidic residues; it reads DSVKKEKQAEKDVEKGNGK. A helical transmembrane segment spans residues 115 to 135; it reads GVCGWILTILSYLLIFFTLPI. The span at 403-421 shows a compositional bias: gly residues; it reads EGGGGHGHSHGGGGGGLGS. Residues 403–481 form a disordered region; it reads EGGGGHGHSH…SQLDPALLIR (79 aa). A compositionally biased stretch (low complexity) spans 433-447; sequence SGPSTTTTSGRPLLR. The span at 463 to 473 shows a compositional bias: polar residues; the sequence is APNQSQTSVSQ.

Belongs to the band 7/mec-2 family. As to quaternary structure, component of a non-voltage-gated amiloride-sensitive cation channel complex (also called the degenerin channel complex) composed of at least the mec-2, mec-4, mec-6 and mec-10 subunits; the complex mediates mechanotransduction in touch cells. Interacts with mec-6 and mec-4.

It localises to the membrane. Subunit of an amiloride-sensitive cation channel (degenerin channel complex) permeable for sodium, potassium, lithium and N-methylglucamine, and required for mechanosensory transduction (touch sensitivity). Positively regulates the activity of the putative mechanosensory transduction channel. May link the mechanosensory channel and the microtubule cytoskeleton of the touch receptor neurons. Required for the function of a set of six touch receptor neurons. The sequence is that of Mechanosensory protein 2 from Caenorhabditis elegans.